A 332-amino-acid chain; its full sequence is 2,3-diketo-L-gulonate reductase (332 aa).

H44 serves as the catalytic Proton donor. NAD(+) is bound by residues 168 to 174, 224 to 225, and 304 to 306; these read ITMVDMS, WK, and GHE.

Belongs to the LDH2/MDH2 oxidoreductase family. DlgD subfamily. As to quaternary structure, homodimer.

It localises to the cytoplasm. It carries out the reaction 3-dehydro-L-gulonate + NAD(+) = 2,3-dioxo-L-gulonate + NADH + H(+). The catalysed reaction is 3-dehydro-L-gulonate + NADP(+) = 2,3-dioxo-L-gulonate + NADPH + H(+). Catalyzes the reduction of 2,3-diketo-L-gulonate in the presence of NADH, to form 3-keto-L-gulonate. The sequence is that of 2,3-diketo-L-gulonate reductase from Salmonella newport (strain SL254).